The chain runs to 741 residues: Phosphoribosylformylglycinamidine synthase subunit PurL (741 aa).

Residue histidine 54 is part of the active site. The ATP site is built by tyrosine 57 and lysine 98. Glutamate 100 is a binding site for Mg(2+). Residues 101–104 and arginine 123 each bind substrate; that span reads SHNH. The active-site Proton acceptor is histidine 102. Aspartate 124 is a binding site for Mg(2+). Glutamine 251 provides a ligand contact to substrate. Aspartate 279 lines the Mg(2+) pocket. 323 to 325 provides a ligand contact to substrate; sequence ESQ. ATP contacts are provided by aspartate 510 and glycine 547. Asparagine 548 provides a ligand contact to Mg(2+). Residue serine 550 coordinates substrate.

The protein belongs to the FGAMS family. As to quaternary structure, monomer. Part of the FGAM synthase complex composed of 1 PurL, 1 PurQ and 2 PurS subunits.

It localises to the cytoplasm. It carries out the reaction N(2)-formyl-N(1)-(5-phospho-beta-D-ribosyl)glycinamide + L-glutamine + ATP + H2O = 2-formamido-N(1)-(5-O-phospho-beta-D-ribosyl)acetamidine + L-glutamate + ADP + phosphate + H(+). It participates in purine metabolism; IMP biosynthesis via de novo pathway; 5-amino-1-(5-phospho-D-ribosyl)imidazole from N(2)-formyl-N(1)-(5-phospho-D-ribosyl)glycinamide: step 1/2. Functionally, part of the phosphoribosylformylglycinamidine synthase complex involved in the purines biosynthetic pathway. Catalyzes the ATP-dependent conversion of formylglycinamide ribonucleotide (FGAR) and glutamine to yield formylglycinamidine ribonucleotide (FGAM) and glutamate. The FGAM synthase complex is composed of three subunits. PurQ produces an ammonia molecule by converting glutamine to glutamate. PurL transfers the ammonia molecule to FGAR to form FGAM in an ATP-dependent manner. PurS interacts with PurQ and PurL and is thought to assist in the transfer of the ammonia molecule from PurQ to PurL. The protein is Phosphoribosylformylglycinamidine synthase subunit PurL of Picrophilus torridus (strain ATCC 700027 / DSM 9790 / JCM 10055 / NBRC 100828 / KAW 2/3).